Reading from the N-terminus, the 456-residue chain is Adenylosuccinate lyase (456 aa).

Residues R15–Y16, N90–D92, and T122–S123 each bind N(6)-(1,2-dicarboxyethyl)-AMP. H171 functions as the Proton donor/acceptor in the catalytic mechanism. Q247 serves as a coordination point for N(6)-(1,2-dicarboxyethyl)-AMP. S295 (proton donor/acceptor) is an active-site residue. N(6)-(1,2-dicarboxyethyl)-AMP is bound by residues S296, K301–N303, N309, R335, and S340–R344.

The protein belongs to the lyase 1 family. Adenylosuccinate lyase subfamily. In terms of assembly, homotetramer. Residues from neighboring subunits contribute catalytic and substrate-binding residues to each active site.

The enzyme catalyses N(6)-(1,2-dicarboxyethyl)-AMP = fumarate + AMP. It catalyses the reaction (2S)-2-[5-amino-1-(5-phospho-beta-D-ribosyl)imidazole-4-carboxamido]succinate = 5-amino-1-(5-phospho-beta-D-ribosyl)imidazole-4-carboxamide + fumarate. The protein operates within purine metabolism; AMP biosynthesis via de novo pathway; AMP from IMP: step 2/2. It participates in purine metabolism; IMP biosynthesis via de novo pathway; 5-amino-1-(5-phospho-D-ribosyl)imidazole-4-carboxamide from 5-amino-1-(5-phospho-D-ribosyl)imidazole-4-carboxylate: step 2/2. Its function is as follows. Catalyzes two reactions in de novo purine nucleotide biosynthesis. Catalyzes the breakdown of 5-aminoimidazole- (N-succinylocarboxamide) ribotide (SAICAR or 2-[5-amino-1-(5-phospho-beta-D-ribosyl)imidazole-4-carboxamido]succinate) to 5-aminoimidazole-4-carboxamide ribotide (AICAR or 5-amino-1-(5-phospho-beta-D-ribosyl)imidazole-4-carboxamide) and fumarate, and of adenylosuccinate (ADS or N(6)-(1,2-dicarboxyethyl)-AMP) to adenosine monophosphate (AMP) and fumarate. The polypeptide is Adenylosuccinate lyase (purB) (Legionella pneumophila (strain Corby)).